The sequence spans 24 residues: Pandinin-2 (24 aa).

In terms of assembly, homooligomer. Expressed by the venom gland.

The protein localises to the secreted. It is found in the target cell membrane. In terms of biological role, disrupts cell membranes through formation of pores. Has strong antimicrobial activity against Gram-positive bacteria B.subtilis, S.epidermidis, E.faecalis and S.aureus. Is less active against Gram-negative bacteria P.aeruginosa and E.coli. Also increases efficacy of antibiotics (ampicillin, chloramphenicol, streptomycin, kanamycin, novobiocin) when tested against E.coli, probably by facilitating their incorporation into the bacteria. Possesses antifungal activity against C.albicans and hemolytic activity against human, sheep and pig erythrocytes. The protein is Pandinin-2 of Pandinus imperator (Emperor scorpion).